Consider the following 103-residue polypeptide: Trp operon repressor homolog (103 aa).

Residues 59-82 (QRQISQMLGVGIATITRGSNELKS) mediate DNA binding.

This sequence belongs to the TrpR family. Homodimer.

It localises to the cytoplasm. This protein is an aporepressor. When complexed with L-tryptophan it binds the operator region of the trp operon and prevents the initiation of transcription. The sequence is that of Trp operon repressor homolog from Vibrio parahaemolyticus serotype O3:K6 (strain RIMD 2210633).